A 430-amino-acid polypeptide reads, in one-letter code: Trigger factor (430 aa).

A PPIase FKBP-type domain is found at Gly-157 to Pro-242.

This sequence belongs to the FKBP-type PPIase family. Tig subfamily.

It is found in the cytoplasm. The enzyme catalyses [protein]-peptidylproline (omega=180) = [protein]-peptidylproline (omega=0). Involved in protein export. Acts as a chaperone by maintaining the newly synthesized protein in an open conformation. Functions as a peptidyl-prolyl cis-trans isomerase. This is Trigger factor from Xanthomonas oryzae pv. oryzae (strain PXO99A).